Reading from the N-terminus, the 366-residue chain is MSYNTFGHIFRVTTWGESHGPALGATVDGCPPGVAIEAEAIQHWLDRRKPGQNRFTTQRQEPDAVRILSGTFEGRSTGTPIQLMIENTDQRSKDYGEIARSFRPGHADIAYHWKYGLRDYRGGGRSSARETAARVAAGGVARAALAALVPGLRIEGYMVQIGPHAIDRARFDADEIERNPFWCPDPDTAALWADYLDGLRKAHDSVGAIVEVRASGVPAGLGAPIYGKLDSDLAAAMMTINAVKGVEIGEGMAAACLTGSANADEIRMGPEGPEFLTNHAGGILGGISTGQDVVVRFAVKPTSSILTPRRSVTTDGREVEVVTKGRHDPCVGIRAVPVGEAMMACVLLDHLLLDRGQTGGLRGTIG.

NADP(+) is bound by residues arginine 48 and arginine 54. FMN-binding positions include 125–127 (RSS), 241–242 (NA), glycine 285, 300–304 (KPTSS), and arginine 326.

It belongs to the chorismate synthase family. In terms of assembly, homotetramer. FMNH2 is required as a cofactor.

It carries out the reaction 5-O-(1-carboxyvinyl)-3-phosphoshikimate = chorismate + phosphate. Its pathway is metabolic intermediate biosynthesis; chorismate biosynthesis; chorismate from D-erythrose 4-phosphate and phosphoenolpyruvate: step 7/7. In terms of biological role, catalyzes the anti-1,4-elimination of the C-3 phosphate and the C-6 proR hydrogen from 5-enolpyruvylshikimate-3-phosphate (EPSP) to yield chorismate, which is the branch point compound that serves as the starting substrate for the three terminal pathways of aromatic amino acid biosynthesis. This reaction introduces a second double bond into the aromatic ring system. This chain is Chorismate synthase, found in Cereibacter sphaeroides (strain ATCC 17023 / DSM 158 / JCM 6121 / CCUG 31486 / LMG 2827 / NBRC 12203 / NCIMB 8253 / ATH 2.4.1.) (Rhodobacter sphaeroides).